The primary structure comprises 269 residues: MNRIHAVILDWAGTTVDFGSFAPTQIFVEAFRQAFDVEITLAEARVPMGLGKWQHIEALGKLPAVDARWQAKFGRSMSAADIDAIYAAFMPLQIAKVVDFSSPIAGVIDTIAALRAEGIKIGSCSGYPRAVMERLVPAAAEHGYRPDHWVATDDLAAGGRPGPWMALQNVIALGIDAVAHCVKVDDAAPGISEGLNAGMWTVGLAVSGNEFGATWDAYQTMSKEDVAVRREHAASKLYAAGAHYVVDSLADLPGVIAHINARLAQGERP.

Asp-10 functions as the Nucleophile in the catalytic mechanism. Mg(2+) contacts are provided by Asp-10 and Ala-12. The active-site Schiff-base intermediate with substrate is the Lys-52. Residue Asp-186 participates in Mg(2+) binding.

It belongs to the HAD-like hydrolase superfamily. PhnX family. In terms of assembly, homodimer. It depends on Mg(2+) as a cofactor.

It catalyses the reaction phosphonoacetaldehyde + H2O = acetaldehyde + phosphate + H(+). Involved in phosphonate degradation. In Salmonella heidelberg (strain SL476), this protein is Phosphonoacetaldehyde hydrolase.